Reading from the N-terminus, the 454-residue chain is Pup--protein ligase (454 aa).

Residue glutamate 9 coordinates Mg(2+). Arginine 53 contributes to the ATP binding site. Tyrosine 55 lines the Mg(2+) pocket. The active-site Proton acceptor is the aspartate 57. Glutamate 63 contributes to the Mg(2+) binding site. 2 residues coordinate ATP: threonine 66 and tryptophan 420.

It belongs to the Pup ligase/Pup deamidase family. Pup-conjugating enzyme subfamily.

The catalysed reaction is ATP + [prokaryotic ubiquitin-like protein]-L-glutamate + [protein]-L-lysine = ADP + phosphate + N(6)-([prokaryotic ubiquitin-like protein]-gamma-L-glutamyl)-[protein]-L-lysine.. It functions in the pathway protein degradation; proteasomal Pup-dependent pathway. It participates in protein modification; protein pupylation. Catalyzes the covalent attachment of the prokaryotic ubiquitin-like protein modifier Pup to the proteasomal substrate proteins, thereby targeting them for proteasomal degradation. This tagging system is termed pupylation. The ligation reaction involves the side-chain carboxylate of the C-terminal glutamate of Pup and the side-chain amino group of a substrate lysine. The chain is Pup--protein ligase from Arthrobacter sp. (strain FB24).